The sequence spans 923 residues: MRFEFESDASSHLNEVLTELESVELENVEYEGPSLQNVSICASPSEKKRKWGTQDEFSLTENEENNEIETNEEMHVNSHDYAFPQEFFLKLLDIDMPLEQLSQHYFEDYKSNSADFMLTFINFALVASGCQPFVTNFDVQDVDSIPETLSQVNRSSFQKSSCAYTDYLYTSNSKEAKTVRIRFQLFLVEFISKVYVEDAFLGDSFMETTKAWIFTMTTSPWMLVRHTATTICCDIMRCLCLIVNKLSEKSNQTAEILVLRDLTSRFIDMIHDICDSVLFSRIHDIRASIRIVCVTALYDCCQLLPTYLINRNLIRHSGWGLSDAESQIRKISLKIIDYLSSHEPEKDQDFVVDFLDRFSLRIVEICRYDIDSVRSVALKTCEKLMEKISLNGKCINIVSSCIFDGKPQNRISTMRILVAHTNERYANYCEAKTATISLSKLLRREKIPLLVSSFESLFKMNALLFILEQGFESWFRDSSDHIFSRVKDDDKFVYQSQENNFYDADFIREYDMNNHRQQLIEESMHSIHTNSQLLASWEDVAKLLLYDRFDAKDTNSVLNPCIPSNAVIEFSSIYLHYFATHISKRSKKPGKRLEDEVVNQQQAMLRNLPLLLQKYRESCVSSYFFIKCVEQIPDELLYKREFHKDFSKLYKEILDIFNSTTVNFLMILCSRFFHRLAVNKVVQEDILFAIDNVYNDLAESLHEQLNAYIQRKKINKKNQLNGNDETQNLVLALNKFGCFAKEMVCLRDVNDWNIKLSEKLCEICSLEVGPIVCYSSLKVLFLLLLSDMRDRNCIFTNIFLKAAKVAKQKNGNSFLSKVFITITMLTLFLGSKANNWDINFSDDDLKLMNEEEIMEQIETFKAWSMKFKEKSSGNPSYFFSPEDTEEKELWNNLFEDWYPNRARDPGTLSHLVKGLKETADHLS.

The SCD domain occupies 278–365 (LFSRIHDIRA…DRFSLRIVEI (88 aa)).

The protein is Meiotic recombination protein rec11 (rec11) of Schizosaccharomyces pombe (strain 972 / ATCC 24843) (Fission yeast).